The sequence spans 521 residues: Signal recognition particle protein (521 aa).

GTP is bound by residues 107–114 (GLQGSGKT), 196–200 (DTAGR), and 254–257 (TKLD). The segment at 436–505 (GGMGIPGMGR…MPDGLNELPP (70 aa)) is disordered. The span at 447–462 (SATRKSKGGKGKKRAR) shows a compositional bias: basic residues.

Belongs to the GTP-binding SRP family. SRP54 subfamily. In terms of assembly, part of the signal recognition particle protein translocation system, which is composed of SRP and FtsY.

It localises to the cytoplasm. The enzyme catalyses GTP + H2O = GDP + phosphate + H(+). Functionally, involved in targeting and insertion of nascent membrane proteins into the cytoplasmic membrane. Binds to the hydrophobic signal sequence of the ribosome-nascent chain (RNC) as it emerges from the ribosomes. The SRP-RNC complex is then targeted to the cytoplasmic membrane where it interacts with the SRP receptor FtsY. In Mycobacterium leprae (strain TN), this protein is Signal recognition particle protein.